Reading from the N-terminus, the 201-residue chain is ATP-dependent Clp protease proteolytic subunit (201 aa).

The Nucleophile role is filled by S100. The active site involves H125.

It belongs to the peptidase S14 family. In terms of assembly, component of the chloroplastic Clp protease core complex.

The protein resides in the plastid. Its subcellular location is the chloroplast stroma. The enzyme catalyses Hydrolysis of proteins to small peptides in the presence of ATP and magnesium. alpha-casein is the usual test substrate. In the absence of ATP, only oligopeptides shorter than five residues are hydrolyzed (such as succinyl-Leu-Tyr-|-NHMec, and Leu-Tyr-Leu-|-Tyr-Trp, in which cleavage of the -Tyr-|-Leu- and -Tyr-|-Trp bonds also occurs).. Its function is as follows. Cleaves peptides in various proteins in a process that requires ATP hydrolysis. Has a chymotrypsin-like activity. Plays a major role in the degradation of misfolded proteins. The protein is ATP-dependent Clp protease proteolytic subunit of Chloranthus spicatus (Chulantree).